The following is a 1369-amino-acid chain: Rho-associated protein kinase 1 (1369 aa).

An N-acetylserine modification is found at Ser2. Residues Tyr76–Phe338 form the Protein kinase domain. ATP contacts are provided by residues Ile82 to Val90 and Lys105. The Proton acceptor role is filled by Asp198. The 69-residue stretch at Asp341 to Ala409 folds into the AGC-kinase C-terminal domain. The tract at residues Phe368–Arg727 is interaction with FHOD1. Positions Lys422–Lys692 form a coiled coil. The REM-1 domain occupies Ser479–Thr556. The interval Glu707–Asn946 is SHROOM3 binding. The region spanning Thr949–Phe1015 is the RhoBD domain. The tract at residues Leu998–Met1010 is RHOA binding. Residues Asn1011–Ser1102 are a coiled coil. Ser1105 and Ser1108 each carry phosphoserine. The interval Asn1115–Ser1369 is auto-inhibitory. The 200-residue stretch at Ser1133 to Pro1332 folds into the PH domain. The segment at Gly1243–Cys1298 adopts a Phorbol-ester/DAG-type zinc-finger fold. The residue at position 1343 (Ser1343) is a Phosphoserine.

It belongs to the protein kinase superfamily. AGC Ser/Thr protein kinase family. As to quaternary structure, homodimer. Interacts with GEM, MYLC2B, RHOE, LIMK1, LIMK2, TSG101, CHORDC1, DAPK3, PFN1, PTEN and JIP3. Interacts with FHOD1 in a Src-dependent manner. Interacts with ITGB1BP1 (via N-terminus and PTB domain). Interacts with RHOA (activated by GTP), RHOB, RHOC and PPP1R12A. Interacts with SHROOM3. Mg(2+) serves as cofactor. Post-translationally, autophosphorylated on serine and threonine residues. In terms of processing, cleaved by caspase-3 during apoptosis. This leads to constitutive activation of the kinase and membrane blebbing. Highly expressed in brain, spleen, lung, liver, skeletal muscle, kidney and testis.

The protein localises to the cytoplasm. It is found in the cytoskeleton. The protein resides in the microtubule organizing center. It localises to the centrosome. Its subcellular location is the centriole. The protein localises to the golgi apparatus membrane. It is found in the cell projection. The protein resides in the bleb. It localises to the cell membrane. Its subcellular location is the lamellipodium. The protein localises to the ruffle. It catalyses the reaction L-seryl-[protein] + ATP = O-phospho-L-seryl-[protein] + ADP + H(+). The enzyme catalyses L-threonyl-[protein] + ATP = O-phospho-L-threonyl-[protein] + ADP + H(+). Activated by RHOA binding. Inhibited by Y-27632. In terms of biological role, protein kinase which is a key regulator of the actin cytoskeleton and cell polarity. Involved in regulation of smooth muscle contraction, actin cytoskeleton organization, stress fiber and focal adhesion formation, neurite retraction, cell adhesion and motility via phosphorylation of DAPK3, GFAP, LIMK1, LIMK2, MYL9/MLC2, TPPP, PFN1 and PPP1R12A. Phosphorylates FHOD1 and acts synergistically with it to promote SRC-dependent non-apoptotic plasma membrane blebbing. Phosphorylates JIP3 and regulates the recruitment of JNK to JIP3 upon UVB-induced stress. Acts as a suppressor of inflammatory cell migration by regulating PTEN phosphorylation and stability. Acts as a negative regulator of VEGF-induced angiogenic endothelial cell activation. Required for centrosome positioning and centrosome-dependent exit from mitosis. Plays a role in terminal erythroid differentiation. Inhibits podocyte motility via regulation of actin cytoskeletal dynamics and phosphorylation of CFL1. Promotes keratinocyte terminal differentiation. Involved in osteoblast compaction through the fibronectin fibrillogenesis cell-mediated matrix assembly process, essential for osteoblast mineralization. May regulate closure of the eyelids and ventral body wall by inducing the assembly of actomyosin bundles. The polypeptide is Rho-associated protein kinase 1 (Rock1) (Rattus norvegicus (Rat)).